Reading from the N-terminus, the 95-residue chain is Large ribosomal subunit protein bL25 (95 aa).

This sequence belongs to the bacterial ribosomal protein bL25 family. Part of the 50S ribosomal subunit; part of the 5S rRNA/L5/L18/L25 subcomplex. Contacts the 5S rRNA. Binds to the 5S rRNA independently of L5 and L18.

In terms of biological role, this is one of the proteins that binds to the 5S RNA in the ribosome where it forms part of the central protuberance. This chain is Large ribosomal subunit protein bL25, found in Shewanella frigidimarina (strain NCIMB 400).